Reading from the N-terminus, the 590-residue chain is Muscarinic acetylcholine receptor M3 (590 aa).

The Extracellular portion of the chain corresponds to 1–67; that stretch reads MTLHNNNTTS…DPLGGHTIWQ (67 aa). N-linked (GlcNAc...) asparagine glycosylation is found at Asn-6, Asn-7, Asn-15, Asn-41, Asn-48, and Asn-53. The chain crosses the membrane as a helical span at residues 68 to 91; it reads VVFIAFLTGVLALVTIIGNILVIV. The Cytoplasmic portion of the chain corresponds to 92-104; sequence AFKVNKQLKTVNN. The helical transmembrane segment at 105–125 threads the bilayer; the sequence is YFLLSLACADLIIGVISMNLF. Residues 126-142 lie on the Extracellular side of the membrane; it reads TTYIIMNRWALGNLACD. A disulfide bond links Cys-141 and Cys-221. Residues 143-164 form a helical membrane-spanning segment; sequence LWLSIDYVASNASVMNLLVISF. Topologically, residues 165–184 are cytoplasmic; it reads DRYFSITRPLTYRAKRTTKR. Residues 185–207 traverse the membrane as a helical segment; the sequence is AGVMIGLAWVISFILWAPAILFW. At 208 to 229 the chain is on the extracellular side; that stretch reads QYFVGKRTVPPGECFIQFLSEP. Residues 230-252 form a helical membrane-spanning segment; that stretch reads TITFGTAIAAFYMPVTIMTILYW. Topologically, residues 253–492 are cytoplasmic; sequence RIYKETEKRT…LIKEKKAAQT (240 aa). Residues 275–281 carry the Basolateral sorting signal motif; sequence AEAENFV. Residues 324 to 357 form a disordered region; sequence AEQMDQDHSSSDSWNNNDAAASLENSASSDEEDI. The span at 334–345 shows a compositional bias: low complexity; sequence SDSWNNNDAAAS. Ser-385 carries the phosphoserine modification. The disordered stretch occupies residues 398–419; the sequence is SVGLERKPSKLQTQQSMDDGGS. A compositionally biased stretch (polar residues) spans 407–419; that stretch reads KLQTQQSMDDGGS. Residues 493-513 traverse the membrane as a helical segment; it reads LSAILLAFIITWTPYNIMVLV. Residues 514–527 are Extracellular-facing; it reads NTFCDSCIPKTYWN. The helical transmembrane segment at 528 to 547 threads the bilayer; the sequence is LGYWLCYINSTVNPVCYALC. Residues 548 to 590 are Cytoplasmic-facing; sequence NKTFRNTFKMLLLCQCDKRKRRKQQYQQRQSVIFHKRVPEQAL.

The protein belongs to the G-protein coupled receptor 1 family. Muscarinic acetylcholine receptor subfamily. CHRM3 sub-subfamily. Homodimer; the dimers can form tetramers. Interacts with NALCN. Interacts with TMEM147.

It localises to the cell membrane. The protein resides in the postsynaptic cell membrane. The protein localises to the basolateral cell membrane. It is found in the endoplasmic reticulum membrane. The muscarinic acetylcholine receptor mediates various cellular responses, including inhibition of adenylate cyclase, breakdown of phosphoinositides and modulation of potassium channels through the action of G proteins. Primary transducing effect is Pi turnover. The chain is Muscarinic acetylcholine receptor M3 (CHRM3) from Bos taurus (Bovine).